The chain runs to 417 residues: Guanine nucleotide-exchange factor SEC12 (417 aa).

Residues 1–388 (MGRRRGVELY…QLHLLPSRRS (388 aa)) lie on the Cytoplasmic side of the membrane. The residue at position 10 (Y10) is a 3'-nitrotyrosine. The tract at residues 101–135 (KGSKAEKSGSKEQGPRQRKGAPPAEKKSGAQVHPE) is disordered. Residues 103-115 (SKAEKSGSKEQGP) are compositionally biased toward basic and acidic residues. WD repeat units lie at residues 152–191 (SNEPLQKVVCFNHDNTLLATGGTDGHVRVWKVPSLEKVLE), 194–232 (AHEGEIGDLTLGPDGKLVTVGWDFKASVWQKDQLVTQLQ), and 298–337 (CGHEVISCLSVSDSGTFLGLGTVTGSVAIYIAFSLQRLYY). The helical transmembrane segment at 389 to 409 (VPVWLLLLLCVGLIIVTILLL) threads the bilayer. Topologically, residues 410-417 (QTAFPGFL) are lumenal.

As to quaternary structure, interacts with SAR1B (GDP-bound form). Interacts with MIA2; recruits PREB to endoplasmic reticulum exit sites. Interacts with CIDEB; facilitating loading of SCAP-SREBP into COPII vesicles.

It is found in the endoplasmic reticulum membrane. It localises to the nucleus. Its function is as follows. Guanine nucleotide exchange factor (GEF) that regulates the assembly of the coat protein complex II/COPII in endoplasmic reticulum (ER) to Golgi vesicle-mediated transport. Selectively activates SAR1A and SAR1B by promoting the exchange of guanosine diphosphate (GDP) for guanosine triphosphate (GTP) in these small GTPases. In their activated GTP-bound state, SAR1A and SAR1B insert into the membrane of the endoplasmic reticulum where they recruit the remainder of the coat protein complex II/COPII which is responsible for both the sorting of proteins and the deformation and budding of membranes into vesicles destined to the Golgi. Was first identified based on its probable role in the regulation of pituitary gene transcription. Binds to the prolactin gene (PRL) promoter and seems to activate transcription. In Mus musculus (Mouse), this protein is Guanine nucleotide-exchange factor SEC12.